We begin with the raw amino-acid sequence, 308 residues long: MIEFSHVSKLFGAQKAVNDLNLNFQEGSFSVLIGTSGSGKSTTLKMINRLVEHDSGEIRFAGEEIRSLPVLELRRRMGYAIQSIGLFPHWSVAQNIATVPQLQKWSRARIDDRIDELMALLGLESNLRERYPHQLSGGQQQRVGVARALAADPQVLLMDEPFGALDPVTRGALQQEMTRIHRLLGRTIVLVTHDIDEALRLAEHLVLMDHGEVVQQGNPLTMLTRPANDFVRQFFGRSELGVRLLSLRSVADYVRREERADGEALAEEMTLRDALSLFVARGCEVLPVVNMQGQPCGTLHFQDLLVEA.

The region spanning 2–235 is the ABC transporter domain; sequence IEFSHVSKLF…PANDFVRQFF (234 aa). ATP is bound at residue 34-41; the sequence is GTSGSGKS.

The protein belongs to the ABC transporter superfamily. The complex is composed of two ATP-binding proteins (YehX), two transmembrane proteins (YehW and YehY) and a solute-binding protein (YehZ).

It carries out the reaction glycine betaine(out) + ATP + H2O = glycine betaine(in) + ADP + phosphate + H(+). Its function is as follows. Part of an ABC transporter complex involved in low-affinity glycine betaine uptake. Probably responsible for energy coupling to the transport system. The sequence is that of Glycine betaine uptake system ATP-binding protein YehX (yehX) from Escherichia coli (strain K12).